The primary structure comprises 343 residues: Holliday junction branch migration complex subunit RuvB (343 aa).

Residues 1-181 are large ATPase domain (RuvB-L); it reads MDRIVEIEKV…FGMQFRLQFY (181 aa). Residues Leu20, Arg21, Gly62, Lys65, Thr66, Thr67, 128–130, Arg171, Tyr181, and Arg218 contribute to the ATP site; that span reads EDF. Thr66 contributes to the Mg(2+) binding site. The small ATPAse domain (RuvB-S) stretch occupies residues 182 to 252; the sequence is TDNELARIIS…RAKSSLDSLG (71 aa). Residues 255-343 form a head domain (RuvB-H) region; sequence DLGFDEMDLK…EKQNKGLFNE (89 aa). DNA is bound by residues Arg308 and Arg313.

It belongs to the RuvB family. In terms of assembly, homohexamer. Forms an RuvA(8)-RuvB(12)-Holliday junction (HJ) complex. HJ DNA is sandwiched between 2 RuvA tetramers; dsDNA enters through RuvA and exits via RuvB. An RuvB hexamer assembles on each DNA strand where it exits the tetramer. Each RuvB hexamer is contacted by two RuvA subunits (via domain III) on 2 adjacent RuvB subunits; this complex drives branch migration. In the full resolvosome a probable DNA-RuvA(4)-RuvB(12)-RuvC(2) complex forms which resolves the HJ.

Its subcellular location is the cytoplasm. The enzyme catalyses ATP + H2O = ADP + phosphate + H(+). In terms of biological role, the RuvA-RuvB-RuvC complex processes Holliday junction (HJ) DNA during genetic recombination and DNA repair, while the RuvA-RuvB complex plays an important role in the rescue of blocked DNA replication forks via replication fork reversal (RFR). RuvA specifically binds to HJ cruciform DNA, conferring on it an open structure. The RuvB hexamer acts as an ATP-dependent pump, pulling dsDNA into and through the RuvAB complex. RuvB forms 2 homohexamers on either side of HJ DNA bound by 1 or 2 RuvA tetramers; 4 subunits per hexamer contact DNA at a time. Coordinated motions by a converter formed by DNA-disengaged RuvB subunits stimulates ATP hydrolysis and nucleotide exchange. Immobilization of the converter enables RuvB to convert the ATP-contained energy into a lever motion, pulling 2 nucleotides of DNA out of the RuvA tetramer per ATP hydrolyzed, thus driving DNA branch migration. The RuvB motors rotate together with the DNA substrate, which together with the progressing nucleotide cycle form the mechanistic basis for DNA recombination by continuous HJ branch migration. Branch migration allows RuvC to scan DNA until it finds its consensus sequence, where it cleaves and resolves cruciform DNA. This Campylobacter fetus subsp. fetus (strain 82-40) protein is Holliday junction branch migration complex subunit RuvB.